An 885-amino-acid polypeptide reads, in one-letter code: Alanine--tRNA ligase (885 aa).

Residues His564, His568, Cys676, and His680 each coordinate Zn(2+).

It belongs to the class-II aminoacyl-tRNA synthetase family. Requires Zn(2+) as cofactor.

It localises to the cytoplasm. It carries out the reaction tRNA(Ala) + L-alanine + ATP = L-alanyl-tRNA(Ala) + AMP + diphosphate. In terms of biological role, catalyzes the attachment of alanine to tRNA(Ala) in a two-step reaction: alanine is first activated by ATP to form Ala-AMP and then transferred to the acceptor end of tRNA(Ala). Also edits incorrectly charged Ser-tRNA(Ala) and Gly-tRNA(Ala) via its editing domain. The polypeptide is Alanine--tRNA ligase (Brucella anthropi (strain ATCC 49188 / DSM 6882 / CCUG 24695 / JCM 21032 / LMG 3331 / NBRC 15819 / NCTC 12168 / Alc 37) (Ochrobactrum anthropi)).